A 122-amino-acid polypeptide reads, in one-letter code: MARIAGVNIPTNKRVVIALQYIHGIGQKNAAEIIDKVKIPADRRVSQLSDQEVLQIREVIDRDYLVEGDLRREVGINIKRLMDLGCYRGLRHRRGLPVRGQRTHTNARTRKGPAKSIAGKKK.

The disordered stretch occupies residues 95–122 (GLPVRGQRTHTNARTRKGPAKSIAGKKK).

The protein belongs to the universal ribosomal protein uS13 family. Part of the 30S ribosomal subunit. Forms a loose heterodimer with protein S19. Forms two bridges to the 50S subunit in the 70S ribosome.

Its function is as follows. Located at the top of the head of the 30S subunit, it contacts several helices of the 16S rRNA. In the 70S ribosome it contacts the 23S rRNA (bridge B1a) and protein L5 of the 50S subunit (bridge B1b), connecting the 2 subunits; these bridges are implicated in subunit movement. Contacts the tRNAs in the A and P-sites. This is Small ribosomal subunit protein uS13 from Nitrobacter hamburgensis (strain DSM 10229 / NCIMB 13809 / X14).